Reading from the N-terminus, the 277-residue chain is Ras suppressor protein 1 (277 aa).

A disordered region spans residues 1-23 (MSKSLKKLVEESREKNQPEVDMS). The residue at position 2 (S2) is an N-acetylserine. Positions 7–23 (KLVEESREKNQPEVDMS) are enriched in basic and acidic residues. LRR repeat units follow at residues 41-63 (HITQLVLSHNKLTTVPPNIAELK), 64-85 (NLEVLNFFNNQIEELPTQISSL), 87-109 (KLKHLNLGMNRLNTLPRGFGSLP), 110-133 (ALEVLDLTYNNLNENSLPGNFFYL), 135-156 (TLRALYLSDNDFEILPPDIGKL), 158-179 (KLQILSLRDNDLISLPKEIGEL), and 181-202 (QLKELHIQGNRLTVLPPELGNL). The disordered stretch occupies residues 250–277 (MQANPEPPKKNNDKSKKISRKPLAAKNK). Over residues 256–265 (PPKKNNDKSK) the composition is skewed to basic and acidic residues.

Its function is as follows. Potentially plays a role in the Ras signal transduction pathway. Capable of suppressing v-Ras transformation in vitro. The chain is Ras suppressor protein 1 (RSU1) from Bos taurus (Bovine).